Consider the following 350-residue polypeptide: 3-dehydroquinate synthase (350 aa).

NAD(+) contacts are provided by residues 106–110, 130–131, Lys143, and Lys152; these read GVIGD and TS. Zn(2+)-binding residues include Glu185, His246, and His263.

It belongs to the sugar phosphate cyclases superfamily. Dehydroquinate synthase family. The cofactor is Co(2+). Zn(2+) serves as cofactor. It depends on NAD(+) as a cofactor.

It is found in the cytoplasm. It carries out the reaction 7-phospho-2-dehydro-3-deoxy-D-arabino-heptonate = 3-dehydroquinate + phosphate. Its pathway is metabolic intermediate biosynthesis; chorismate biosynthesis; chorismate from D-erythrose 4-phosphate and phosphoenolpyruvate: step 2/7. In terms of biological role, catalyzes the conversion of 3-deoxy-D-arabino-heptulosonate 7-phosphate (DAHP) to dehydroquinate (DHQ). In Clostridium beijerinckii (strain ATCC 51743 / NCIMB 8052) (Clostridium acetobutylicum), this protein is 3-dehydroquinate synthase.